The following is a 58-amino-acid chain: Ikitoxin (58 aa).

Residues 3–58 (VPGNYPLDKDGNTYKCFLLGENEECLNVCKLHGVQYGYCYASKCWCEYLEDDKDSV) enclose the LCN-type CS-alpha/beta domain. 3 disulfide bridges follow: cysteine 18–cysteine 41, cysteine 27–cysteine 46, and cysteine 31–cysteine 48.

As to expression, expressed by the venom gland.

Its subcellular location is the secreted. Its function is as follows. Beta toxins bind voltage-independently at site-4 of sodium channels (Nav) and shift the voltage of activation toward more negative potentials thereby affecting sodium channel activation and promoting spontaneous and repetitive firing. Does not produce effect when administered to blowfly and cabbage looper larvae. In mice, does not produce convulsions, tremors, increased ventilation nor death. The chain is Ikitoxin from Parabuthus transvaalicus (Transvaal thick-tailed scorpion).